The sequence spans 84 residues: Exodeoxyribonuclease 7 small subunit (84 aa).

The protein belongs to the XseB family. In terms of assembly, heterooligomer composed of large and small subunits.

It localises to the cytoplasm. The catalysed reaction is Exonucleolytic cleavage in either 5'- to 3'- or 3'- to 5'-direction to yield nucleoside 5'-phosphates.. Bidirectionally degrades single-stranded DNA into large acid-insoluble oligonucleotides, which are then degraded further into small acid-soluble oligonucleotides. In Haemophilus influenzae (strain 86-028NP), this protein is Exodeoxyribonuclease 7 small subunit.